A 355-amino-acid polypeptide reads, in one-letter code: RNA binding protein fox-1 homolog 1 (355 aa).

The tract at residues 1-123 is disordered; the sequence is MNCEREQLRG…QPKRLHVSNI (123 aa). Over residues 70–112 the composition is skewed to polar residues; that stretch reads QSHSEQSAADTSAHTVSGTATTDDSAPTDGQPQTQPSENTENK. Residues 116 to 174 form the RRM domain; the sequence is KRLHVSNIPFRFRDPDLRQMFGGFGFVTFENSADADRAREKLHGTVVEGRKIEVNNATA. R298 bears the Asymmetric dimethylarginine mark.

In terms of assembly, binds to the C-terminus of ATXN2.

It is found in the nucleus. The protein resides in the cytoplasm. Functionally, RNA-binding protein that regulates alternative splicing events by binding to 5'-UGCAUGU-3' elements. Prevents binding of U2AF2 to the 3'-splice site. Regulates alternative splicing of tissue-specific exons and of differentially spliced exons during erythropoiesis. This is RNA binding protein fox-1 homolog 1 (RBFOX1) from Bos taurus (Bovine).